The sequence spans 127 residues: Glycine cleavage system H protein (127 aa).

The Lipoyl-binding domain occupies 23 to 105; the sequence is KVSVGITDFA…YGEGWIAVIE (83 aa). An N6-lipoyllysine modification is found at Lys-64.

Belongs to the GcvH family. As to quaternary structure, the glycine cleavage system is composed of four proteins: P, T, L and H. Requires (R)-lipoate as cofactor.

Functionally, the glycine cleavage system catalyzes the degradation of glycine. The H protein shuttles the methylamine group of glycine from the P protein to the T protein. The protein is Glycine cleavage system H protein of Coprothermobacter proteolyticus (strain ATCC 35245 / DSM 5265 / OCM 4 / BT).